The sequence spans 110 residues: Cytochrome bo(3) ubiquinol oxidase subunit 4 (110 aa).

Residues 1-18 (MANAHDTHHEGNHGSVKS) lie on the Cytoplasmic side of the membrane. The helical transmembrane segment at 19 to 39 (YMIGFILSIILTAIPFGLAMS) threads the bilayer. Residues 40–46 (PSLPKNL) are Periplasmic-facing. The helical transmembrane segment at 47-67 (TVLIIVAMAVIQVVVHLVYFL) threads the bilayer. Residues 68-78 (HMDRSKEQRNN) are Cytoplasmic-facing. A helical membrane pass occupies residues 79–99 (VWTFLFTTLVIALLVGLSLWI). Residues 100 to 110 (MFSIHFEMLAK) are Periplasmic-facing.

It belongs to the cytochrome c oxidase bacterial subunit 4 family. As to quaternary structure, heterooctamer of two A chains, two B chains, two C chains and two D chains.

Its subcellular location is the cell inner membrane. Cytochrome bo(3) ubiquinol terminal oxidase is the component of the aerobic respiratory chain of E.coli that predominates when cells are grown at high aeration. Has proton pump activity across the membrane in addition to electron transfer, pumping 2 protons/electron. The polypeptide is Cytochrome bo(3) ubiquinol oxidase subunit 4 (cyoD) (Pseudomonas putida (Arthrobacter siderocapsulatus)).